The chain runs to 154 residues: SsrA-binding protein (154 aa).

Belongs to the SmpB family.

The protein resides in the cytoplasm. Functionally, required for rescue of stalled ribosomes mediated by trans-translation. Binds to transfer-messenger RNA (tmRNA), required for stable association of tmRNA with ribosomes. tmRNA and SmpB together mimic tRNA shape, replacing the anticodon stem-loop with SmpB. tmRNA is encoded by the ssrA gene; the 2 termini fold to resemble tRNA(Ala) and it encodes a 'tag peptide', a short internal open reading frame. During trans-translation Ala-aminoacylated tmRNA acts like a tRNA, entering the A-site of stalled ribosomes, displacing the stalled mRNA. The ribosome then switches to translate the ORF on the tmRNA; the nascent peptide is terminated with the 'tag peptide' encoded by the tmRNA and targeted for degradation. The ribosome is freed to recommence translation, which seems to be the essential function of trans-translation. This chain is SsrA-binding protein, found in Solidesulfovibrio magneticus (strain ATCC 700980 / DSM 13731 / RS-1) (Desulfovibrio magneticus).